The following is a 724-amino-acid chain: Methionine--tRNA ligase (724 aa).

The 'HIGH' region motif lies at 11-21 (PYANGPIHAGH). Zn(2+) is bound by residues Cys143, Cys146, Cys156, and Cys159. The 'KMSKS' region motif lies at 344-348 (KFSTS). Thr347 lines the ATP pocket. Positions 624-724 (EFSKIDLRIG…KEVKLGAKVR (101 aa)) constitute a tRNA-binding domain.

This sequence belongs to the class-I aminoacyl-tRNA synthetase family. MetG type 1 subfamily. In terms of assembly, homodimer. The cofactor is Zn(2+).

The protein localises to the cytoplasm. It carries out the reaction tRNA(Met) + L-methionine + ATP = L-methionyl-tRNA(Met) + AMP + diphosphate. Its function is as follows. Is required not only for elongation of protein synthesis but also for the initiation of all mRNA translation through initiator tRNA(fMet) aminoacylation. The sequence is that of Methionine--tRNA ligase from Pyrococcus furiosus (strain ATCC 43587 / DSM 3638 / JCM 8422 / Vc1).